The primary structure comprises 203 residues: MMQDVSSSPVSPADDSLSNSEEEPDRQQPQSGKRGGRKRRSSRRSAGGGAGPGGAAGGGVGGGDEPGSPAQGKRGKKSAGCGGGGGSAGGGGGSSSGGGSPQSYEELQTQRVMANVRGRQRTQSLNEAFAALRKIIPTLPSDKLSKIQTLKLAARYIDFLYQVLQSDELDSKMASCSYVAHERLSYAFSVWRMEGAWSMSASH.

Residues 1-18 (MMQDVSSSPVSPADDSLS) show a composition bias toward low complexity. The segment at 1-105 (MMQDVSSSPV…SGGGSPQSYE (105 aa)) is disordered. Residues 34–43 (RGGRKRRSSR) show a composition bias toward basic residues. 2 stretches are compositionally biased toward gly residues: residues 46-65 (AGGGAGPGGAAGGGVGGGDE) and 80-100 (GCGGGGGSAGGGGGSSSGGGS). Positions 109–160 (TQRVMANVRGRQRTQSLNEAFAALRKIIPTLPSDKLSKIQTLKLAARYIDFL) constitute a bHLH domain. The sufficient for transactivation activity stretch occupies residues 162 to 192 (QVLQSDELDSKMASCSYVAHERLSYAFSVWR).

Efficient DNA binding requires dimerization with another bHLH protein. Homodimer or heterodimer with E proteins such as TCF3. ID1 binds preferentially to TCF3 but does not interact efficiently with TWIST1 so ID1 levels control the amount of TCF3 available to dimerize with TWIST and thus determine the type of dimer formed.

It is found in the nucleus. Acts as a transcriptional regulator. Inhibits myogenesis by sequestrating E proteins, inhibiting trans-activation by MEF2, and inhibiting DNA-binding by MYOD1 through physical interaction. This interaction probably involves the basic domains of both proteins. Also represses expression of pro-inflammatory cytokines such as TNFA and IL1B. Regulates cranial suture patterning and fusion. Activates transcription as a heterodimer with E proteins. Regulates gene expression differentially, depending on dimer composition. Homodimers induce expression of FGFR2 and POSTN while heterodimers repress FGFR2 and POSTN expression and induce THBS1 expression. Heterodimerization is also required for osteoblast differentiation. Represses the activity of the circadian transcriptional activator: NPAS2-BMAL1 heterodimer. The polypeptide is Twist-related protein 1 (TWIST1) (Callithrix jacchus (White-tufted-ear marmoset)).